Reading from the N-terminus, the 183-residue chain is MTHILVVDNHGQFTHLEHRLLRDMDGVTVDLTDNTTPPADIDADGLVLSGGPTMADIGHCREYLTLDVPILGVCLGHQLIADELGGRIEAGDYGGYADVTVSISDADDPLVGSLAPDTRVWASHADEVVAVPDGFTITAESDICGVEAMGDTDRDLYGVQWHPEVAHTEEGEAVFENFVAICE.

The Glutamine amidotransferase type-1 domain occupies 3–183; that stretch reads HILVVDNHGQ…VFENFVAICE (181 aa). Cysteine 74 functions as the Nucleophile in the catalytic mechanism. Active-site residues include histidine 162 and glutamate 164.

Heterodimer composed of a glutamine amidotransferase subunit (A) and a GMP-binding subunit (B).

It catalyses the reaction XMP + L-glutamine + ATP + H2O = GMP + L-glutamate + AMP + diphosphate + 2 H(+). The protein operates within purine metabolism; GMP biosynthesis; GMP from XMP (L-Gln route): step 1/1. Catalyzes the synthesis of GMP from XMP. The polypeptide is GMP synthase [glutamine-hydrolyzing] subunit A (Halobacterium salinarum (strain ATCC 700922 / JCM 11081 / NRC-1) (Halobacterium halobium)).